Consider the following 191-residue polypeptide: Cell division protein SepF (191 aa).

The interval 1 to 77 is disordered; the sequence is MEGQDDYQLL…MGSNVIGLPG (77 aa).

This sequence belongs to the SepF family. Homodimer. Interacts with FtsZ.

The protein localises to the cytoplasm. Cell division protein that is part of the divisome complex and is recruited early to the Z-ring. Probably stimulates Z-ring formation, perhaps through the cross-linking of FtsZ protofilaments. Its function overlaps with FtsA. This chain is Cell division protein SepF, found in Synechococcus sp. (strain JA-2-3B'a(2-13)) (Cyanobacteria bacterium Yellowstone B-Prime).